Here is a 212-residue protein sequence, read N- to C-terminus: Uridine kinase (212 aa).

13-20 (GASASGKS) contributes to the ATP binding site.

The protein belongs to the uridine kinase family.

It is found in the cytoplasm. The catalysed reaction is uridine + ATP = UMP + ADP + H(+). The enzyme catalyses cytidine + ATP = CMP + ADP + H(+). Its pathway is pyrimidine metabolism; CTP biosynthesis via salvage pathway; CTP from cytidine: step 1/3. The protein operates within pyrimidine metabolism; UMP biosynthesis via salvage pathway; UMP from uridine: step 1/1. The protein is Uridine kinase of Shewanella denitrificans (strain OS217 / ATCC BAA-1090 / DSM 15013).